Consider the following 281-residue polypeptide: 2-dehydro-3-deoxyphosphooctonate aldolase (281 aa).

This sequence belongs to the KdsA family.

It localises to the cytoplasm. It carries out the reaction D-arabinose 5-phosphate + phosphoenolpyruvate + H2O = 3-deoxy-alpha-D-manno-2-octulosonate-8-phosphate + phosphate. It functions in the pathway carbohydrate biosynthesis; 3-deoxy-D-manno-octulosonate biosynthesis; 3-deoxy-D-manno-octulosonate from D-ribulose 5-phosphate: step 2/3. Its pathway is bacterial outer membrane biogenesis; lipopolysaccharide biosynthesis. This is 2-dehydro-3-deoxyphosphooctonate aldolase from Pseudomonas fluorescens (strain SBW25).